Reading from the N-terminus, the 443-residue chain is UDP-N-acetylmuramate--L-alanine ligase (443 aa).

110–116 is an ATP binding site; it reads GAHGKTS.

This sequence belongs to the MurCDEF family.

Its subcellular location is the cytoplasm. It catalyses the reaction UDP-N-acetyl-alpha-D-muramate + L-alanine + ATP = UDP-N-acetyl-alpha-D-muramoyl-L-alanine + ADP + phosphate + H(+). It functions in the pathway cell wall biogenesis; peptidoglycan biosynthesis. Cell wall formation. The protein is UDP-N-acetylmuramate--L-alanine ligase of Streptococcus equi subsp. zooepidemicus (strain MGCS10565).